The primary structure comprises 141 residues: Large ribosomal subunit protein uL11 (141 aa).

This sequence belongs to the universal ribosomal protein uL11 family. Part of the ribosomal stalk of the 50S ribosomal subunit. Interacts with L10 and the large rRNA to form the base of the stalk. L10 forms an elongated spine to which L12 dimers bind in a sequential fashion forming a multimeric L10(L12)X complex. One or more lysine residues are methylated.

Forms part of the ribosomal stalk which helps the ribosome interact with GTP-bound translation factors. This Streptococcus suis (strain 05ZYH33) protein is Large ribosomal subunit protein uL11.